The primary structure comprises 545 residues: Chaperonin GroEL 2 (545 aa).

ATP is bound by residues 29–32 (TLGP), 86–90 (DGTTT), G413, 479–481 (NAA), and D495.

This sequence belongs to the chaperonin (HSP60) family. Forms a cylinder of 14 subunits composed of two heptameric rings stacked back-to-back. Interacts with the co-chaperonin GroES.

The protein localises to the cytoplasm. The enzyme catalyses ATP + H2O + a folded polypeptide = ADP + phosphate + an unfolded polypeptide.. Functionally, together with its co-chaperonin GroES, plays an essential role in assisting protein folding. The GroEL-GroES system forms a nano-cage that allows encapsulation of the non-native substrate proteins and provides a physical environment optimized to promote and accelerate protein folding. The sequence is that of Chaperonin GroEL 2 from Prochlorococcus marinus (strain AS9601).